A 369-amino-acid chain; its full sequence is Anhydro-N-acetylmuramic acid kinase (369 aa).

An ATP-binding site is contributed by 12–19 (GTSLDGVD).

It belongs to the anhydro-N-acetylmuramic acid kinase family.

It carries out the reaction 1,6-anhydro-N-acetyl-beta-muramate + ATP + H2O = N-acetyl-D-muramate 6-phosphate + ADP + H(+). The protein operates within amino-sugar metabolism; 1,6-anhydro-N-acetylmuramate degradation. Its pathway is cell wall biogenesis; peptidoglycan recycling. Catalyzes the specific phosphorylation of 1,6-anhydro-N-acetylmuramic acid (anhMurNAc) with the simultaneous cleavage of the 1,6-anhydro ring, generating MurNAc-6-P. Is required for the utilization of anhMurNAc either imported from the medium or derived from its own cell wall murein, and thus plays a role in cell wall recycling. This is Anhydro-N-acetylmuramic acid kinase from Escherichia coli (strain SE11).